Reading from the N-terminus, the 992-residue chain is RNA-binding motif protein, X-linked-like-3 (992 aa).

Residues 8 to 86 form the RRM domain; the sequence is EKLFVGGLNL…KAIMVAQTIK (79 aa). Disordered regions lie at residues 91-130, 144-169, 188-207, 278-385, 397-511, 562-588, and 644-992; these read SSRW…PDDG, APMP…DPGD, PDYC…GRDH, DHLP…DSSS, EEYQ…HRYR, SLDA…SHRY, and NSGG…QSRY. Residues 284 to 296 are compositionally biased toward low complexity; that stretch reads YSGGRSSSSNSYS. Residues 297-316 show a composition bias toward basic and acidic residues; sequence RSDRYGEEGCYEEYRGRSPD. A compositionally biased stretch (low complexity) spans 318-334; sequence HSGGRNSSSNSYGQSHH. The segment covering 335 to 371 has biased composition (basic and acidic residues); sequence YGGEGRYEEYRGRYEEYRGRSHEARSGGRSTDAHSGG. Residues 454–471 show a composition bias toward low complexity; that stretch reads THSGGRSSSSNSYGQSHR. The segment covering 472–488 has biased composition (basic and acidic residues); it reads YGGEGHYEYRGRSHDAH. 3 stretches are compositionally biased toward polar residues: residues 564-574, 644-664, and 752-774; these read DANSGGRSPNA, NSGG…SQSH, and DANS…SNSY. Over residues 785–798 the composition is skewed to basic and acidic residues; it reads HYEEYRGRSHDTHS. Residues 818 to 828 show a composition bias toward polar residues; it reads GRNSFSNSYGQ. Basic and acidic residues-rich tracts occupy residues 831–842, 920–948, and 981–992; these read HYGRGGRYEEYQ, SGDH…RPDR, and GRFERGEGQSRY.

This chain is RNA-binding motif protein, X-linked-like-3 (RBMXL3), found in Pan troglodytes (Chimpanzee).